Consider the following 418-residue polypeptide: Thyroid hormone receptor alpha (418 aa).

The tract at residues 1-41 is disordered; the sequence is MDQNLSGLDCLSEPDEKRWPDGKRKRKNSQCMGKSGMSGDS. The modulating stretch occupies residues 1–60; sequence MDQNLSGLDCLSEPDEKRWPDGKRKRKNSQCMGKSGMSGDSSVSLLSAGYIPSYLTKDEP. 8 residues coordinate Zn(2+): Cys61, Cys64, Cys78, Cys81, Cys99, Cys105, Cys115, and Cys118. 2 NR C4-type zinc fingers span residues 61–81 and 99–123; these read CVVCSDKATGYHYRCITCEGC and CKYDGCCIIDKITRNQCQLCRFKKC. The segment at residues 61–135 is a DNA-binding region (nuclear receptor); that stretch reads CVVCSDKATG…VGMAMDLVLD (75 aa). Positions 171-415 constitute an NR LBD domain; the sequence is EEWELIRIVT…PPLFLEVFED (245 aa). 3,3',5-triiodo-L-thyronine contacts are provided by Arg236 and Ser285.

It belongs to the nuclear hormone receptor family. NR1 subfamily. As to expression, highest level of expression in erythrocytes. Also expressed in liver, tail, eye, muscle and skin.

The protein resides in the nucleus. Nuclear hormone receptor that can act as a repressor or activator of transcription. High affinity receptor for thyroid hormones, including triiodothyronine and thyroxine. The polypeptide is Thyroid hormone receptor alpha (thra) (Aquarana catesbeiana (American bullfrog)).